Reading from the N-terminus, the 618-residue chain is Sodium-coupled monocarboxylate transporter 2 (618 aa).

The Extracellular segment spans residues 1–9 (MEVKNFAVW). A helical transmembrane segment spans residues 10–30 (DYVVFAALFFISSGIGVFFAI). Residues 31-47 (KERKKATSREFLVGGRQ) lie on the Cytoplasmic side of the membrane. A helical transmembrane segment spans residues 48–68 (MSFGPVGLSLTASFMSAVTVL). At 69–82 (GTPSEVYRFGASFL) the chain is on the extracellular side. Residues 83-103 (VFFIAYLFVILLTSELFLPVF) traverse the membrane as a helical segment. Topologically, residues 104 to 128 (YRSGITSTYEYLQLRFNKPVRYAAT) are cytoplasmic. A helical transmembrane segment spans residues 129 to 149 (VIYIVQTILYTGVVVYAPALA). At 150-157 (LNQVTGFD) the chain is on the extracellular side. Residues 158–178 (LWGSVFATGIVCTFYCTLGGL) form a helical membrane-spanning segment. Over 179 to 180 (KA) the chain is Cytoplasmic. Residues 181–201 (VVWTDAFQMVVMIVGFLTVLI) traverse the membrane as a helical segment. At 202–235 (QGSTHAGGFHNVLEQSTNGSRLHIFDFDVDPLRR) the chain is on the extracellular side. Residues 236–256 (HTFWTITVGGTFTWLGIYGVN) form a helical membrane-spanning segment. Over 257-275 (QSTIQRCISCKTEKHAKLA) the chain is Cytoplasmic. A helical transmembrane segment spans residues 276 to 296 (LYFNLLGLWIILVCAVFSGLI). Residues 297–321 (MYSHFKDCDPWTSGIISAPDQLMPY) are Extracellular-facing. A helical transmembrane segment spans residues 322 to 342 (FVMEIFATMPGLPGLFVACAF). The Cytoplasmic segment spans residues 343-385 (SGTLSTVASSINALATVTFEDFVKSCFPHLSDKLSTWISKGLC). Residues 386-406 (LLFGVMCTSMAVAASVMGGVV) form a helical membrane-spanning segment. The Extracellular segment spans residues 407–411 (QASLS). Residues 412 to 432 (IHGMCGGPMLGLFSLGIVFPF) traverse the membrane as a helical segment. The Cytoplasmic segment spans residues 433-437 (VNWKG). A helical transmembrane segment spans residues 438 to 458 (ALGGLLTGITLSFWVAIGAFI). The Extracellular portion of the chain corresponds to 459-504 (YPAPASKTWPLPLSTDQCIKSNVTATGPPVLSSRPGIADTWYSISY). N-linked (GlcNAc...) asparagine glycosylation occurs at Asn480. The chain crosses the membrane as a helical span at residues 505 to 525 (LYYSAVGCLGCIVAGVIISLI). Topologically, residues 526 to 618 (TGRQRGEDIQ…NNMAFETTHF (93 aa)) are cytoplasmic.

Belongs to the sodium:solute symporter (SSF) (TC 2.A.21) family.

It is found in the apical cell membrane. It catalyses the reaction (S)-lactate(out) + Na(+)(out) = (S)-lactate(in) + Na(+)(in). The enzyme catalyses nicotinate(out) + Na(+)(out) = nicotinate(in) + Na(+)(in). The catalysed reaction is pyruvate(out) + Na(+)(out) = pyruvate(in) + Na(+)(in). It carries out the reaction propanoate(out) + Na(+)(out) = propanoate(in) + Na(+)(in). It catalyses the reaction butanoate(out) + Na(+)(out) = butanoate(in) + Na(+)(in). The enzyme catalyses acetoacetate(out) + Na(+)(out) = acetoacetate(in) + Na(+)(in). Cotransport of monocarboxylates and nicotinate strongly inhibited by ibuprofen, fenoprofen and ketoprofen. Acts as an electroneutral and low-affinity sodium (Na(+))-dependent sodium-coupled solute transporter. Catalyzes the transport across the plasma membrane of many monocarboxylates such as lactate, pyruvate, nicotinate, propionate, butyrate and beta-D-hydroxybutyrate. May be responsible for the first step of reabsorption of monocarboxylates from the lumen of the proximal tubule of the kidney and the small intestine. May play also a role in monocarboxylates transport in the retina. The chain is Sodium-coupled monocarboxylate transporter 2 from Homo sapiens (Human).